Here is a 277-residue protein sequence, read N- to C-terminus: Diaminopimelate epimerase (277 aa).

Residues Asn-15 and Asn-74 each coordinate substrate. Cys-83 acts as the Proton donor in catalysis. Residues 84-85 (GN), Asn-159, Asn-194, and 212-213 (ER) contribute to the substrate site. The active-site Proton acceptor is the Cys-221. 222 to 223 (GT) is a substrate binding site.

Belongs to the diaminopimelate epimerase family. As to quaternary structure, homodimer.

It localises to the cytoplasm. It carries out the reaction (2S,6S)-2,6-diaminopimelate = meso-2,6-diaminopimelate. Its pathway is amino-acid biosynthesis; L-lysine biosynthesis via DAP pathway; DL-2,6-diaminopimelate from LL-2,6-diaminopimelate: step 1/1. Functionally, catalyzes the stereoinversion of LL-2,6-diaminopimelate (L,L-DAP) to meso-diaminopimelate (meso-DAP), a precursor of L-lysine and an essential component of the bacterial peptidoglycan. The protein is Diaminopimelate epimerase of Corynebacterium glutamicum (strain R).